A 416-amino-acid chain; its full sequence is Enterobactin exporter EntS (416 aa).

The Cytoplasmic portion of the chain corresponds to 1–21 (MNKQSWLLNLSLLKTHPAFRA). A helical membrane pass occupies residues 22 to 42 (VFLARFISIVSLGLLGVAVPV). Residues 43–55 (QIQMMTHSTWQVG) lie on the Periplasmic side of the membrane. The helical transmembrane segment at 56-76 (LSVTLTGGAMFVGLMVGGVLA) threads the bilayer. The Cytoplasmic segment spans residues 77 to 83 (DRYERKK). Residues 84-104 (VILLARGTCGIGFIGLCLNAL) traverse the membrane as a helical segment. Residues 105–109 (LPEPS) are Periplasmic-facing. The helical transmembrane segment at 110–130 (LLAIYLLGLWDGFFASLGVTA) threads the bilayer. At 131–156 (LLAATPALVGRENLMQAGAITMLTVR) the chain is on the cytoplasmic side. Residues 157-177 (LGSVISPMIGGLLLATGGVAW) form a helical membrane-spanning segment. Position 178 (N178) is a topological domain, periplasmic. A helical membrane pass occupies residues 179–199 (YGLAAAGTFITLLPLLSLPAL). At 200–218 (PPPPQPREHPLKSLLAGFR) the chain is on the cytoplasmic side. Residues 219-239 (FLLASPLVGGIALLGGLLTMA) form a helical membrane-spanning segment. Residues 240 to 256 (SAVRVLYPALADNWQMS) are Periplasmic-facing. Residues 257–277 (AAQIGFLYAAIPLGAAIGALT) traverse the membrane as a helical segment. Residues 278–287 (SGKLAHSVRP) are Cytoplasmic-facing. Residues 288–307 (GLLMLLSTLGAFLAIGLFGL) form a helical membrane-spanning segment. At 308–313 (MPMWIL) the chain is on the periplasmic side. A helical membrane pass occupies residues 314–336 (GVVCLALFGWLSAVSSLLQYTML). Residues 337–356 (QTQTPEAMLGRINGLWTAQN) lie on the Cytoplasmic side of the membrane. A helical transmembrane segment spans residues 357–377 (VTGDAIGAALLGGLGAMMTPV). Residue A378 is a topological domain, periplasmic. Residues 379–399 (SASASGFGLLIIGVLLLLVLV) form a helical membrane-spanning segment. At 400–416 (ELRRFRQTPPQVTASDS) the chain is on the cytoplasmic side.

The protein belongs to the major facilitator superfamily. EntS (TC 2.A.1.38) family.

The protein resides in the cell inner membrane. Functionally, component of an export pathway for enterobactin. The protein is Enterobactin exporter EntS of Escherichia coli O6:H1 (strain CFT073 / ATCC 700928 / UPEC).